An 85-amino-acid polypeptide reads, in one-letter code: uncharacterized protein (85 aa).

2 consecutive transmembrane segments (helical) span residues 12 to 34 and 49 to 71; these read ICLSVVTFSTSYSLDAGVVVLAF and IPEFLWVTWQSFIKVLSLLNGFV.

It localises to the cell membrane. This is an uncharacterized protein from Archaeoglobus fulgidus (strain ATCC 49558 / DSM 4304 / JCM 9628 / NBRC 100126 / VC-16).